A 445-amino-acid chain; its full sequence is MAITIVSVRARQIFDSRGNPTVEADVKLSDGYLARAAVPSGASTGIYEALELRDGGSDYLGKGVSKAVENVNIIIGPALVGKDPTDQVGIDNFMVQQLDGTVNEWGWCKQKLGANAILAVSLAVCKAGAHVKGIPLYEHIANLAGNKNLVLPVPAFNVINGGSHAGNKLAMQEFMILPVGASSFKEAMKMGAEVYHHLKSVIKKKYGQDATNVGDEGGFAPNIQENKEGLELLKTAIAKAGYTGKVVIGMDVAASEFYGSDQTYDLNFKEENNNGSQKISGEALKDLYKSFVAEYPIVSIEDPFDQDDWAHYAKLTSEIGEKVQIVGDDLLVTNPKRVEKAIKEKACNALLLKVNQIGSVTESIEAVKMSKRAGWGVMASHRSGETEDTFIADLSVGLATGQIKTGAPCRSERLAKYNQLLRIEEELGSEAVYAGANFRKPVEPY.

Substrate-binding residues include His-164 and Glu-173. Glu-216 (proton donor) is an active-site residue. Residues Asp-251, Glu-301, and Asp-328 each coordinate Mg(2+). Substrate contacts are provided by Glu-301 and Asp-328. The active-site Proton acceptor is Lys-353. Residues 380–383 and Lys-404 contribute to the substrate site; that span reads SHRS.

Belongs to the enolase family. In terms of assembly, homodimer. Mg(2+) serves as cofactor.

The protein resides in the cytoplasm. It catalyses the reaction (2R)-2-phosphoglycerate = phosphoenolpyruvate + H2O. Its pathway is carbohydrate degradation; glycolysis; pyruvate from D-glyceraldehyde 3-phosphate: step 4/5. The protein is Enolase 1 (ENO1) of Hevea brasiliensis (Para rubber tree).